A 116-amino-acid polypeptide reads, in one-letter code: ATP-dependent Clp protease adapter protein ClpS (116 aa).

A compositionally biased stretch (polar residues) spans 1–11 (MRRFNTIMQGK). Positions 1 to 23 (MRRFNTIMQGKTNGGNGPESGTV) are disordered.

Belongs to the ClpS family. In terms of assembly, binds to the N-terminal domain of the chaperone ClpA.

Involved in the modulation of the specificity of the ClpAP-mediated ATP-dependent protein degradation. This Brucella melitensis biotype 2 (strain ATCC 23457) protein is ATP-dependent Clp protease adapter protein ClpS.